The chain runs to 502 residues: Mitochondrial fusion and transport protein UGO1 (502 aa).

At M1 the chain carries N-acetylmethionine. Topologically, residues 1–293 (MNNNNVTEAT…VINSPDISKS (293 aa)) are cytoplasmic. The interval 1-294 (MNNNNVTEAT…INSPDISKSF (294 aa)) is binds FZO1. The stretch at 288–383 (PDISKSFILA…NSFFNKLFDL (96 aa)) is one Solcar repeat. A helical; Signal-anchor for type II membrane protein transmembrane segment spans residues 294-314 (FILALGAGVFTSIILLPVDLI). The tract at residues 312 to 502 (DLIRTRLIVT…VDINMEQEKF (191 aa)) is binds MGM1. The Mitochondrial intermembrane portion of the chain corresponds to 315–502 (RTRLIVTSFK…VDINMEQEKF (188 aa)).

Interacts with FZO1 through its cytoplasmic domain and with MGM1 through its mitochondrial intermembrane space domain.

It is found in the mitochondrion outer membrane. In terms of biological role, required for mitochondrial fusion as well as normal mitochondrial morphology by bridging the essential interaction between FZO1 and MGM1. May coordinate fusion of inner and outer membranes during mitochondrial fusion. This Saccharomyces cerevisiae (strain ATCC 204508 / S288c) (Baker's yeast) protein is Mitochondrial fusion and transport protein UGO1.